Reading from the N-terminus, the 470-residue chain is Putative multidrug resistance protein MdtD (470 aa).

At 1–11 (MTELPDNTRWQ) the chain is on the periplasmic side. The chain crosses the membrane as a helical span at residues 12 to 32 (LWIVALGFFMQSLDTTIVNTA). The Cytoplasmic portion of the chain corresponds to 33–48 (LPSMAKSLGESPLHMH). The helical transmembrane segment at 49 to 69 (MVVVSYVLTVAVMLPASGWLA) threads the bilayer. Topologically, residues 70 to 76 (DKIGVRN) are periplasmic. The helical transmembrane segment at 77 to 97 (IFFAAIVLFTLGSLFCALSGT) threads the bilayer. The Cytoplasmic portion of the chain corresponds to 98–101 (LNQL). The helical transmembrane segment at 102 to 124 (VLARVLQGVGGAMMVPVGRLTVM) threads the bilayer. Topologically, residues 125–137 (KIVPRAQYMAAMT) are periplasmic. A helical membrane pass occupies residues 138-158 (FVTLPGQIGPLLGPALGGVLV). Topologically, residues 159 to 164 (EYASWH) are cytoplasmic. The chain crosses the membrane as a helical span at residues 165–185 (WIFLINIPVGIVGAMATFMLM). Topologically, residues 186 to 196 (PNYTIETRRFD) are periplasmic. Residues 197–217 (LPGFLLLAIGMAVLTLALDGS) form a helical membrane-spanning segment. Over 218 to 221 (KSMG) the chain is Cytoplasmic. The helical transmembrane segment at 222–242 (ISPWTLAGLAAGGAAAILLYL) threads the bilayer. Residues 243-262 (LHAKKNSGALFSLRLFRTPT) lie on the Periplasmic side of the membrane. Residues 263-283 (FSLGLLGSFAGRIGSGMLPFM) form a helical membrane-spanning segment. Residues 284–285 (TP) are Cytoplasmic-facing. The chain crosses the membrane as a helical span at residues 286–306 (VFLQIGLGFSPFHAGLMMIPM). Residues 307 to 341 (VLGSMGMKRIVVQIVNRFGYRRVLVATTLGLALVS) lie on the Periplasmic side of the membrane. The helical transmembrane segment at 342–362 (LLFMSVALLGWYYLLPLVLLL) threads the bilayer. Over 363-395 (QGMVNSARFSSMNTLTLKDLPDTLASSGNSLLS) the chain is Cytoplasmic. The chain crosses the membrane as a helical span at residues 396–416 (MIMQLSMSIGVTIAGMLLGMF). The Periplasmic portion of the chain corresponds to 417–430 (GQQHIGIDSSATHH). A helical membrane pass occupies residues 431 to 451 (VFMYTWLCMAVIIALPAIIFA). Residues 452 to 470 (RVPNDTQQNMVISRRKRSL) are Cytoplasmic-facing.

Belongs to the major facilitator superfamily. TCR/Tet family.

The protein resides in the cell inner membrane. The sequence is that of Putative multidrug resistance protein MdtD from Salmonella heidelberg (strain SL476).